Consider the following 429-residue polypeptide: 46 kDa membrane protein (429 aa).

A run of 9 helical transmembrane segments spans residues 26–46 (AALT…EDVF), 51–71 (TGID…VSVL), 99–119 (LVLV…VLLI), 173–193 (FLIH…ALLP), 224–244 (LLIK…AHPV), 279–299 (TLLF…TDVV), 315–335 (LLTV…IDNI), 360–380 (ILWW…AVGA), and 407–427 (IAVT…RYLV).

Belongs to the CitM (TC 2.A.11) transporter family.

It localises to the cell membrane. The polypeptide is 46 kDa membrane protein (ag45) (Mycobacterium leprae (strain TN)).